Here is a 198-residue protein sequence, read N- to C-terminus: MSETFIYPQANLIAGVDEVGRGPLVGAVVTAAVILDPNRPIVGLADSKKLSEKRRLSLYDEITEKALSWSLGRAEPEEIDQLNILHAAMLAMQRAVSGLHIVPDYVLIDGNRCPKLQMPSLAVVKGDSRVAEISAASILAKVTRDREMTELDLLFPEYGFAQHKGYPTAFHLEKLAALGATVHHRRSFGPVKRVLGLV.

Residues 11–198 (NLIAGVDEVG…GPVKRVLGLV (188 aa)) enclose the RNase H type-2 domain. Residues aspartate 17, glutamate 18, and aspartate 109 each coordinate a divalent metal cation.

The protein belongs to the RNase HII family. It depends on Mn(2+) as a cofactor. Mg(2+) serves as cofactor.

The protein localises to the cytoplasm. It carries out the reaction Endonucleolytic cleavage to 5'-phosphomonoester.. Functionally, endonuclease that specifically degrades the RNA of RNA-DNA hybrids. The sequence is that of Ribonuclease HII from Yersinia pseudotuberculosis serotype O:3 (strain YPIII).